Reading from the N-terminus, the 239-residue chain is Large ribosomal subunit protein bL25 (239 aa).

The interval 211 to 239 (KGKKDKEDEEAEKGTSVASPTTATGGTKK) is disordered. Over residues 226–239 (SVASPTTATGGTKK) the composition is skewed to polar residues.

Belongs to the bacterial ribosomal protein bL25 family. CTC subfamily. In terms of assembly, part of the 50S ribosomal subunit; part of the 5S rRNA/L5/L18/L25 subcomplex. Contacts the 5S rRNA. Binds to the 5S rRNA independently of L5 and L18.

In terms of biological role, this is one of the proteins that binds to the 5S RNA in the ribosome where it forms part of the central protuberance. This chain is Large ribosomal subunit protein bL25, found in Endomicrobium trichonymphae.